The sequence spans 257 residues: Hydroxyacylglutathione hydrolase (257 aa).

Positions 55, 57, 59, 60, 112, 129, and 167 each coordinate Zn(2+).

It belongs to the metallo-beta-lactamase superfamily. Glyoxalase II family. In terms of assembly, monomer. The cofactor is Zn(2+).

It catalyses the reaction an S-(2-hydroxyacyl)glutathione + H2O = a 2-hydroxy carboxylate + glutathione + H(+). The protein operates within secondary metabolite metabolism; methylglyoxal degradation; (R)-lactate from methylglyoxal: step 2/2. Thiolesterase that catalyzes the hydrolysis of S-D-lactoyl-glutathione to form glutathione and D-lactic acid. The protein is Hydroxyacylglutathione hydrolase of Pseudoalteromonas translucida (strain TAC 125).